Reading from the N-terminus, the 405-residue chain is Cysteine desulfurase IscS (405 aa).

N156 contributes to the pyridoxal 5'-phosphate binding site. K207 carries the post-translational modification N6-(pyridoxal phosphate)lysine. C329 acts as the Cysteine persulfide intermediate in catalysis. C329 contributes to the [2Fe-2S] cluster binding site.

This sequence belongs to the class-V pyridoxal-phosphate-dependent aminotransferase family. NifS/IscS subfamily. Homodimer. Forms a heterotetramer with IscU, interacts with other sulfur acceptors. Pyridoxal 5'-phosphate serves as cofactor.

The protein resides in the cytoplasm. It carries out the reaction (sulfur carrier)-H + L-cysteine = (sulfur carrier)-SH + L-alanine. Its pathway is cofactor biosynthesis; iron-sulfur cluster biosynthesis. Functionally, master enzyme that delivers sulfur to a number of partners involved in Fe-S cluster assembly, tRNA modification or cofactor biosynthesis. Catalyzes the removal of elemental sulfur atoms from cysteine to produce alanine. Functions as a sulfur delivery protein for Fe-S cluster synthesis onto IscU, an Fe-S scaffold assembly protein, as well as other S acceptor proteins. In Dechloromonas aromatica (strain RCB), this protein is Cysteine desulfurase IscS.